The sequence spans 311 residues: Methionyl-tRNA formyltransferase (311 aa).

Position 112-115 (112-115 (SLLP)) interacts with (6S)-5,6,7,8-tetrahydrofolate.

The protein belongs to the Fmt family.

The catalysed reaction is L-methionyl-tRNA(fMet) + (6R)-10-formyltetrahydrofolate = N-formyl-L-methionyl-tRNA(fMet) + (6S)-5,6,7,8-tetrahydrofolate + H(+). Functionally, attaches a formyl group to the free amino group of methionyl-tRNA(fMet). The formyl group appears to play a dual role in the initiator identity of N-formylmethionyl-tRNA by promoting its recognition by IF2 and preventing the misappropriation of this tRNA by the elongation apparatus. This chain is Methionyl-tRNA formyltransferase, found in Chelativorans sp. (strain BNC1).